The sequence spans 616 residues: Tumor necrosis factor receptor superfamily member 11A (616 aa).

The first 29 residues, 1-29 (MAPRARRRRPLFALLLLCALLARLQVALQ), serve as a signal peptide directing secretion. Over 30 to 212 (IAPPCTSEKH…PPNEPHVYLP (183 aa)) the chain is Extracellular. Intrachain disulfides connect Cys-34/Cys-46, Cys-47/Cys-60, Cys-50/Cys-68, Cys-71/Cys-86, Cys-92/Cys-112, Cys-114/Cys-127, Cys-124/Cys-126, Cys-133/Cys-151, and Cys-154/Cys-169. TNFR-Cys repeat units lie at residues 34 to 68 (CTSE…DSVC), 71 to 112 (CGPD…PRRC), 114 to 151 (CTAG…DTVC), and 154 to 194 (CLAG…DAVC). A glycan (N-linked (GlcNAc...) asparagine) is linked at Asn-105. Cys-133, Ala-134, and Ser-160 together coordinate Na(+). Residue Asn-174 is glycosylated (N-linked (GlcNAc...) asparagine). Residues Cys-175 and Cys-194 are joined by a disulfide bond. A helical membrane pass occupies residues 213–233 (GLIILLLFASVALVAAIIFGV). Residues 234-616 (CYRKKGKALT…PVQEQGGAKA (383 aa)) lie on the Cytoplasmic side of the membrane. A disordered region spans residues 468–536 (PLPQCAYGMG…GNSNSTFISS (69 aa)). The span at 483–493 (EASRTEARDQP) shows a compositional bias: basic and acidic residues. Positions 499–508 (GRLPSSARAG) are enriched in low complexity. Residues 524-536 (NVTGNSNSTFISS) show a composition bias toward polar residues. The interval 544–549 (GDIIVV) is required for interaction with EEIG1 and osteoclast differentiation. A disordered region spans residues 556-616 (QEGAAAAAEP…PVQEQGGAKA (61 aa)). Over residues 570 to 580 (VQEETLARRDS) the composition is skewed to basic and acidic residues. Position 580 is a phosphoserine (Ser-580).

In terms of assembly, binds to the clefts between the subunits of the TNFSF11 ligand trimer to form a heterohexamer. Part of a complex composed of EEIG1, TNFRSF11A/RANK, PLCG2, GAB2, TEC and BTK; complex formation increases in the presence of TNFSF11/RANKL. Interacts with TRAF1, TRAF2, TRAF3, TRAF5 and TRAF6. Interacts (via cytoplasmic domain) with GAB2. Interacts (via cytoplasmic domain); with EEIG1 (via N-terminus); when in the presence of TNFSF11/RANKL. In terms of tissue distribution, ubiquitous expression with high levels in skeletal muscle, thymus, liver, colon, small intestine and adrenal gland.

It is found in the cell membrane. The protein resides in the membrane raft. In terms of biological role, receptor for TNFSF11/RANKL/TRANCE/OPGL; essential for RANKL-mediated osteoclastogenesis. Its interaction with EEIG1 promotes osteoclastogenesis via facilitating the transcription of NFATC1 and activation of PLCG2. Involved in the regulation of interactions between T-cells and dendritic cells. The chain is Tumor necrosis factor receptor superfamily member 11A (TNFRSF11A) from Homo sapiens (Human).